We begin with the raw amino-acid sequence, 419 residues long: Divergent protein kinase domain 1C (419 aa).

The Cytoplasmic portion of the chain corresponds to 1 to 22 (MARAAGARGPAGWCRRRGRCGR). Residues 16–17 (RR) carry the May mediate ER retention motif. The helical transmembrane segment at 23–43 (GTLLAFAAWTAGWVLAAALLL) threads the bilayer. Residues 44–419 (RAHPGVLSER…TLRELQEAEK (376 aa)) are Lumenal-facing.

Belongs to the DIPK family. In terms of processing, among the many cysteines in the lumenal domain, most are probably involved in disulfide bonds.

It localises to the endoplasmic reticulum membrane. The protein is Divergent protein kinase domain 1C of Homo sapiens (Human).